Here is a 322-residue protein sequence, read N- to C-terminus: Beta-1,3-galactosyltransferase bre-5 (322 aa).

Over 1-16 (MFLCVRILKRKYHELS) the chain is Cytoplasmic. A helical; Signal-anchor for type II membrane protein membrane pass occupies residues 17-37 (SFQKLLIFTITIFLLWVLGVV). At 38–322 (DKFRETSFGD…YEYSQLNGFE (285 aa)) the chain is on the lumenal side. N150 carries an N-linked (GlcNAc...) asparagine glycan.

This sequence belongs to the glycosyltransferase 31 family. Expressed in the gut.

The protein resides in the golgi apparatus membrane. Its pathway is protein modification; protein glycosylation. Functionally, transfers N-acetylgalactosamine onto mannose groups of carbohydrate substrates. Required for susceptibility to pore-forming crystal toxins in conjunction with bre-1, bre-2, bre-3, and bre-4. Involved in resistance to the nematotoxic C.cinerea galectin Cgl2. This chain is Beta-1,3-galactosyltransferase bre-5, found in Caenorhabditis elegans.